The following is a 278-amino-acid chain: Neuronal membrane glycoprotein M6-a (278 aa).

An N-acetylmethionine modification is found at methionine 1. Residues 1–22 (MEENMEEGQTQKGCFECCIKCL) lie on the Cytoplasmic side of the membrane. A helical membrane pass occupies residues 23–43 (GGIPYASLIATILLYAGVALF). At 44–84 (CGCGHEALSGTVNILQTYFELARTAGDTLDVFTMIDIFKYV) the chain is on the extracellular side. A helical membrane pass occupies residues 85–105 (IYGIAAAFFVYGILLMVEGFF). The Cytoplasmic segment spans residues 106–127 (TTGAIKDLYGDFKITTCGRCVS). Residues 128 to 148 (AWFIMLTYLFMLAWLGVTAFT) traverse the membrane as a helical segment. Over 149-213 (SLPVYMYFNV…STELNMTFHL (65 aa)) the chain is Extracellular. A glycan (N-linked (GlcNAc...) asparagine) is linked at asparagine 164. A disulfide bond links cysteine 174 and cysteine 192. Asparagine 208 carries N-linked (GlcNAc...) asparagine glycosylation. A helical membrane pass occupies residues 214-234 (FIVALAGAGAAVIAMVHYLMV). Residues 235-278 (LSANWAYVKDACRMQKYEDIKSKEEQELHDIHSTRSKERLNAYT) lie on the Cytoplasmic side of the membrane. At serine 256 the chain carries Phosphoserine. The residue at position 278 (threonine 278) is a Phosphothreonine.

It belongs to the myelin proteolipid protein family. As to quaternary structure, interacts with OPRM1. Interacts with palmitoyltransferase ZDHHC17/HIP14; the interaction leads to palmitoylation of GPM6A. N-glycosylated. In terms of processing, palmitoylated by ZDHHC17/HIP14. In terms of tissue distribution, widely expressed in the CNS. Found especially in the granule cell layer of the cerebellum but not in the molecular layer or white matter. Expressed in the immature embryonic retina including the nerve fiber layer (NFL), inner plexiform layer (IPL), and outer plexiform layer (OPL). Weakly expressed in processes of Mueller glia cells.

The protein localises to the cell membrane. It is found in the cell projection. It localises to the axon. Its subcellular location is the growth cone. The protein resides in the dendritic spine. The protein localises to the filopodium. It is found in the neuron projection. Its function is as follows. Involved in neuronal differentiation, including differentiation and migration of neuronal stem cells. Plays a role in neuronal plasticity and is involved in neurite and filopodia outgrowth, filopodia motility and probably synapse formation. Gpm6a-induced filopodia formation involves mitogen-activated protein kinase (MAPK) and Src signaling pathways. Conflictingly, PubMed:22162747 reports that induced cellular protrusions are simple membrane-wrapped tubules without actin or tubulin-based cytoskeletons and with Gpm6a gliding along membrane edges indicative for a function in actin-independent membrane deformation. May be involved in neuronal NGF-dependent Ca(2+) influx. May be involved in regulation of endocytosis and intracellular trafficking of G-protein-coupled receptors (GPCRs); enhances internalization and recycling of mu-type opioid receptor. This Mus musculus (Mouse) protein is Neuronal membrane glycoprotein M6-a (Gpm6a).